The following is a 156-amino-acid chain: MNIIEANVATPDARVAITIARFNNFINDSLLEGAIDALKRIGQVKDENITVVWVPGAYELPLAAGALAKTGKYDAVIALGTVIRGGTAHFEYVAGGASNGLAHVAQDSEIPVAFGVLTTESIEQAIERAGTKAGNKGAEAALTALEMINVLKAIKA.

5-amino-6-(D-ribitylamino)uracil-binding positions include F22, 57–59, and 81–83; these read AYE and TVI. Position 86-87 (86-87) interacts with (2S)-2-hydroxy-3-oxobutyl phosphate; that stretch reads GT. The active-site Proton donor is H89. A 5-amino-6-(D-ribitylamino)uracil-binding site is contributed by F114. R128 is a (2S)-2-hydroxy-3-oxobutyl phosphate binding site.

The protein belongs to the DMRL synthase family. In terms of assembly, forms an icosahedral capsid composed of 60 subunits, arranged as a dodecamer of pentamers.

The enzyme catalyses (2S)-2-hydroxy-3-oxobutyl phosphate + 5-amino-6-(D-ribitylamino)uracil = 6,7-dimethyl-8-(1-D-ribityl)lumazine + phosphate + 2 H2O + H(+). The protein operates within cofactor biosynthesis; riboflavin biosynthesis; riboflavin from 2-hydroxy-3-oxobutyl phosphate and 5-amino-6-(D-ribitylamino)uracil: step 1/2. Functionally, catalyzes the formation of 6,7-dimethyl-8-ribityllumazine by condensation of 5-amino-6-(D-ribitylamino)uracil with 3,4-dihydroxy-2-butanone 4-phosphate. This is the penultimate step in the biosynthesis of riboflavin. In Citrobacter koseri (strain ATCC BAA-895 / CDC 4225-83 / SGSC4696), this protein is 6,7-dimethyl-8-ribityllumazine synthase.